Consider the following 618-residue polypeptide: DNA ligase 2 (618 aa).

Positions 197–208 (DKKTLESREDAK) are enriched in basic and acidic residues. Residues 197 to 250 (DKKTLESREDAKSVPPASQPEITNKISGDTSPNTSESVQTKKSDPDTSSNVDPS) are disordered. The segment covering 216 to 234 (PEITNKISGDTSPNTSESV) has biased composition (polar residues). E312 is a binding site for ATP. K314 acts as the N6-AMP-lysine intermediate in catalysis. ATP is bound by residues R319, R334, E363, F403, R476, and K482. The interval 459 to 480 (HEGVMLKDPDSTYNPGSRGQHW) is disordered.

The protein belongs to the ATP-dependent DNA ligase family. Mg(2+) is required as a cofactor.

It catalyses the reaction ATP + (deoxyribonucleotide)n-3'-hydroxyl + 5'-phospho-(deoxyribonucleotide)m = (deoxyribonucleotide)n+m + AMP + diphosphate.. Functionally, DNA ligase that seals nicks in double-stranded DNA during DNA replication, DNA recombination and DNA repair. This chain is DNA ligase 2, found in Haloquadratum walsbyi (strain DSM 16790 / HBSQ001).